The chain runs to 433 residues: ATP-sensitive inward rectifier potassium channel 12 (433 aa).

Residues 1 to 77 are Cytoplasmic-facing; that stretch reads MTAASRANPY…LADMFTTCVD (77 aa). At C75 the chain carries S-nitrosocysteine. A helical membrane pass occupies residues 78 to 104; it reads IRWRYMLLIFSLAFLASWLLFGIIFWV. Residues R79 and R81 each coordinate a 1,2-diacyl-sn-glycero-3-phospho-(1D-myo-inositol-4,5-bisphosphate). Residues 105–129 are Extracellular-facing; the sequence is IAVAHGDLEPAEGRGRTPCVMQVHG. An intrachain disulfide couples C123 to C155. The helical; Pore-forming intramembrane region spans 130–146; sequence FMAAFLFSIETQTTIGY. The K(+) site is built by T143, I144, G145, and Y146. The short motif at 143–148 is the Selectivity filter element; the sequence is TIGYGL. The Extracellular segment spans residues 147-155; it reads GLRCVTEEC. A helical transmembrane segment spans residues 156-183; the sequence is PVAVFMVVAQSIVGCIIDSFMIGAIMAK. A 1,2-diacyl-sn-glycero-3-phospho-(1D-myo-inositol-4,5-bisphosphate)-binding residues include K183 and K188. Residues 184–433 lie on the Cytoplasmic side of the membrane; the sequence is MARPKKRAQT…QRPYRRESEI (250 aa). The tract at residues 387 to 433 is disordered; sequence DEEDEADGDQDGRSRDGLSPQARHDFDRLQAGGGVLEQRPYRRESEI. Residues 396-414 show a composition bias toward basic and acidic residues; it reads QDGRSRDGLSPQARHDFDR. The PDZ-binding motif lies at 431 to 433; it reads SEI.

This sequence belongs to the inward rectifier-type potassium channel (TC 1.A.2.1) family. KCNJ12 subfamily. In terms of assembly, homotetramer. Forms heteromer with KCNJ4. Can form heteromeric channels with Kir2.6/KCNJ18. Association, via its PDZ-recognition domain, with LIN7A, LIN7B, LIN7C, DLG1, CASK and APBA1 plays a key role in its localization and trafficking.

It is found in the membrane. The protein localises to the cell membrane. Its subcellular location is the sarcolemma. It localises to the T-tubule. It catalyses the reaction K(+)(in) = K(+)(out). With respect to regulation, activated by phosphatidylinositol 4,5-biphosphate (PtdIns(4,5)P2). PtdIns(4,5)P2 binding to the cytoplasmic side of the channel triggers a conformation change leading to channel opening. Inhibited by Ba(2+). In terms of biological role, inward rectifying potassium channel that probably participates in controlling the resting membrane potential in electrically excitable cells. Probably participates in establishing action potential waveform and excitability of neuronal and muscle tissues. Inward rectifier potassium channels are characterized by a greater tendency to allow potassium to flow into the cell rather than out of it. Their voltage dependence is regulated by the concentration of extracellular potassium; as external potassium is raised, the voltage range of the channel opening shifts to more positive voltages. The inward rectification is mainly due to the blockage of outward current by internal magnesium. This Homo sapiens (Human) protein is ATP-sensitive inward rectifier potassium channel 12 (KCNJ12).